Consider the following 181-residue polypeptide: Crossover junction endodeoxyribonuclease RuvC (181 aa).

Active-site residues include aspartate 7, glutamate 67, and aspartate 139. Positions 7, 67, and 139 each coordinate Mg(2+).

The protein belongs to the RuvC family. As to quaternary structure, homodimer which binds Holliday junction (HJ) DNA. The HJ becomes 2-fold symmetrical on binding to RuvC with unstacked arms; it has a different conformation from HJ DNA in complex with RuvA. In the full resolvosome a probable DNA-RuvA(4)-RuvB(12)-RuvC(2) complex forms which resolves the HJ. The cofactor is Mg(2+).

The protein resides in the cytoplasm. It catalyses the reaction Endonucleolytic cleavage at a junction such as a reciprocal single-stranded crossover between two homologous DNA duplexes (Holliday junction).. Its function is as follows. The RuvA-RuvB-RuvC complex processes Holliday junction (HJ) DNA during genetic recombination and DNA repair. Endonuclease that resolves HJ intermediates. Cleaves cruciform DNA by making single-stranded nicks across the HJ at symmetrical positions within the homologous arms, yielding a 5'-phosphate and a 3'-hydroxyl group; requires a central core of homology in the junction. The consensus cleavage sequence is 5'-(A/T)TT(C/G)-3'. Cleavage occurs on the 3'-side of the TT dinucleotide at the point of strand exchange. HJ branch migration catalyzed by RuvA-RuvB allows RuvC to scan DNA until it finds its consensus sequence, where it cleaves and resolves the cruciform DNA. This Bordetella avium (strain 197N) protein is Crossover junction endodeoxyribonuclease RuvC.